Here is a 452-residue protein sequence, read N- to C-terminus: Probable pectate lyase 9 (452 aa).

Positions 1–25 (MATSSLKLTSACFVLLFIFVGCVLT) are cleaved as a signal peptide. N-linked (GlcNAc...) asparagine glycosylation is found at N88, N139, N214, and N233. D250 is a Ca(2+) binding site. N271 carries N-linked (GlcNAc...) asparagine glycosylation. Ca(2+) contacts are provided by D274 and D278. N-linked (GlcNAc...) asparagine glycosylation is found at N281 and N305. R330 is an active-site residue. N374 is a glycosylation site (N-linked (GlcNAc...) asparagine).

The protein belongs to the polysaccharide lyase 1 family. Ca(2+) is required as a cofactor.

The enzyme catalyses Eliminative cleavage of (1-&gt;4)-alpha-D-galacturonan to give oligosaccharides with 4-deoxy-alpha-D-galact-4-enuronosyl groups at their non-reducing ends.. Its pathway is glycan metabolism; pectin degradation; 2-dehydro-3-deoxy-D-gluconate from pectin: step 2/5. The polypeptide is Probable pectate lyase 9 (Arabidopsis thaliana (Mouse-ear cress)).